Consider the following 265-residue polypeptide: Aquaporin-5 (265 aa).

Residues 1–12 (MKKEVCSAAFLK) lie on the Cytoplasmic side of the membrane. The chain crosses the membrane as a helical span at residues 13 to 33 (AVFAEFLATLIFVFFGLGSAL). Residues 34–39 (KWPSAM) lie on the Extracellular side of the membrane. A helical membrane pass occupies residues 40–60 (PSVLQISLAFGLAIGTMAQAL). The Cytoplasmic segment spans residues 61 to 65 (GPVSG). Residues 66 to 74 (GHMNPAITL) constitute an intramembrane region (discontinuously helical). The short motif at 69–71 (NPA) is the NPA 1 element. Over 75 to 87 (ALLVGNQISLLRA) the chain is Cytoplasmic. A helical transmembrane segment spans residues 88–108 (VFYLVAQLVGAIAGAAILYGL). Residues 109-126 (APYNARSNLAVNALNNNT) are Extracellular-facing. Asparagine 124 and asparagine 125 each carry an N-linked (GlcNAc...) asparagine glycan. The helical transmembrane segment at 127 to 147 (TAGQAVVAEMILTFQLALCVF) threads the bilayer. Over 148-158 (SSTDSRRTSPV) the chain is Cytoplasmic. Residues 159-179 (GSPALSIGLSVTLGHLVGIYF) form a helical membrane-spanning segment. Threonine 180 is a topological domain (extracellular). Residues 181–191 (GCSMNPARSFG) constitute an intramembrane region (discontinuously helical). Residues 185-187 (NPA) carry the NPA 2 motif. At 192 to 203 (PAVIMSRFSSAH) the chain is on the extracellular side. The helical transmembrane segment at 204-224 (WVFWVGPIVGAATAAIIYFYL) threads the bilayer. The Cytoplasmic portion of the chain corresponds to 225–265 (LFPHSLSLSDRVAILKGTYEPDEDWEESQEERKKTMELTAH).

This sequence belongs to the MIP/aquaporin (TC 1.A.8) family. As to quaternary structure, homotetramer; each monomer provides an independent water pore. Interacts with TRPV4; the interaction is probably indirect and regulates TRPV4 activation by hypotonicity.

The protein resides in the apical cell membrane. It localises to the cell membrane. Its subcellular location is the cytoplasmic vesicle membrane. It carries out the reaction H2O(in) = H2O(out). Functionally, aquaporins form homotetrameric transmembrane channels, with each monomer independently mediating water transport across the plasma membrane along its osmotic gradient. Plays an important role in fluid secretion in salivary glands. Required for TRPV4 activation by hypotonicity. Together with TRPV4, controls regulatory volume decrease in salivary epithelial cells. Seems to play a redundant role in water transport in the eye, lung and in sweat glands. In Ovis aries (Sheep), this protein is Aquaporin-5.